We begin with the raw amino-acid sequence, 366 residues long: tRNA/tmRNA (uracil-C(5))-methyltransferase (366 aa).

5 residues coordinate S-adenosyl-L-methionine: Q187, Y215, N220, E236, and D297. C322 acts as the Nucleophile in catalysis. The active-site Proton acceptor is E356.

Belongs to the class I-like SAM-binding methyltransferase superfamily. RNA M5U methyltransferase family. TrmA subfamily.

The enzyme catalyses uridine(54) in tRNA + S-adenosyl-L-methionine = 5-methyluridine(54) in tRNA + S-adenosyl-L-homocysteine + H(+). The catalysed reaction is uridine(341) in tmRNA + S-adenosyl-L-methionine = 5-methyluridine(341) in tmRNA + S-adenosyl-L-homocysteine + H(+). Dual-specificity methyltransferase that catalyzes the formation of 5-methyluridine at position 54 (m5U54) in all tRNAs, and that of position 341 (m5U341) in tmRNA (transfer-mRNA). In Marinomonas sp. (strain MWYL1), this protein is tRNA/tmRNA (uracil-C(5))-methyltransferase.